Consider the following 258-residue polypeptide: Phosphate import ATP-binding protein PstB (258 aa).

The 243-residue stretch at 5–247 (LDLKDVNIYY…EKIFSNPTQK (243 aa)) folds into the ABC transporter domain. 37 to 44 (GPSGCGKS) is a binding site for ATP.

This sequence belongs to the ABC transporter superfamily. Phosphate importer (TC 3.A.1.7) family. In terms of assembly, the complex is composed of two ATP-binding proteins (PstB), two transmembrane proteins (PstC and PstA) and a solute-binding protein (PstS).

It is found in the cell membrane. The catalysed reaction is phosphate(out) + ATP + H2O = ADP + 2 phosphate(in) + H(+). In terms of biological role, part of the ABC transporter complex PstSACB involved in phosphate import. Responsible for energy coupling to the transport system. In Rhodococcus jostii (strain RHA1), this protein is Phosphate import ATP-binding protein PstB.